We begin with the raw amino-acid sequence, 351 residues long: Calcium homeostasis modulator 1 (351 aa).

Residues 1 to 20 (MDKFRMMFQFLQSNQESFMN) are Cytoplasmic-facing. The central pore stretch occupies residues 9–36 (QFLQSNQESFMNGICGIMALASAQMYSS). A helical membrane pass occupies residues 21-36 (GICGIMALASAQMYSS). Topologically, residues 37–48 (FEFSCPCMPEYN) are extracellular. Cystine bridges form between Cys41-Cys126 and Cys43-Cys160. The chain crosses the membrane as a helical span at residues 49–71 (YTYGIGLLIIPPIWFFLLGFVLN). A phospholipid-binding region spans residues 62–69 (WFFLLGFV). Residues 72 to 98 (NNVSVLAEEWKRPTGRRTKDPSVLRYM) lie on the Cytoplasmic side of the membrane. A helical membrane pass occupies residues 99–124 (LCSITQRSLIAPAVWVSVTLMDGKSF). A lipid anchor (S-palmitoyl cysteine) is attached at Cys100. The interval 104–116 (QRSLIAPAVWVSV) is phospholipid-binding. Residues 125 to 177 (LCAFSINLDIEKFGNASLVIGMTETEKLKFLARIPCKDLFEDNEVRVAATRYI) are Extracellular-facing. Residue Asn139 is glycosylated (N-linked (GlcNAc...) asparagine). Residues 178-203 (KCISQACGWMFLLMMTFTAFLIRAIR) form a helical membrane-spanning segment. The tract at residues 189 to 199 (LLMMTFTAFLI) is phospholipid-binding. Residues 204–351 (PCFTQAAFLK…KEWAVYYSKV (148 aa)) are Cytoplasmic-facing. Residue Cys205 is the site of S-palmitoyl cysteine attachment. Residues 259–281 (HRHQSKDTSDAEEEEKQRSDEDK) form a disordered region. Basic and acidic residues predominate over residues 263–281 (SKDTSDAEEEEKQRSDEDK).

The protein belongs to the CALHM family. As to quaternary structure, oligomerizes to form hexamers and octamers. Does not form gap junctions. Associates with CALHM3 as a pore-forming subunit in a hetero-hexameric channel complex. N-glycosylated. In terms of processing, palmitoylated.

Its subcellular location is the cell membrane. The protein resides in the endoplasmic reticulum membrane. It localises to the basolateral cell membrane. The enzyme catalyses ATP(in) = ATP(out). The catalysed reaction is Ca(2+)(in) = Ca(2+)(out). It carries out the reaction Mg(2+)(in) = Mg(2+)(out). It catalyses the reaction Na(+)(in) = Na(+)(out). The enzyme catalyses K(+)(in) = K(+)(out). The catalysed reaction is Li(+)(in) = Li(+)(out). It carries out the reaction Rb(+)(in) = Rb(+)(out). It catalyses the reaction Cs(+)(in) = Cs(+)(out). The enzyme catalyses chloride(in) = chloride(out). Its activity is regulated as follows. Activated in response to membrane depolarization and low extracellular Ca(2+) concentration. Inhibited by ruthenium red. Its function is as follows. Pore-forming subunit of a voltage-gated ion channel. Has poor ion selectivity and forms a wide pore that mediates permeation of small ions including Ca(2+), Na(+), K(+) and Cl(-), as well as larger ions such as ATP(4-). The sequence is that of Calcium homeostasis modulator 1 from Oryzias latipes (Japanese rice fish).